A 377-amino-acid chain; its full sequence is Carbamoyl phosphate synthase small chain (377 aa).

Residues 1-186 (MSTPALLVLA…LGKGFVTPDE (186 aa)) form a CPSase region. Serine 47, glycine 238, and glycine 240 together coordinate L-glutamine. A Glutamine amidotransferase type-1 domain is found at 190–377 (HVVAYDFGVK…IGNMKAAKRA (188 aa)). The active-site Nucleophile is the cysteine 266. L-glutamine contacts are provided by leucine 267, glutamine 270, asparagine 308, glycine 310, and phenylalanine 311. Catalysis depends on residues histidine 350 and glutamate 352.

The protein belongs to the CarA family. As to quaternary structure, composed of two chains; the small (or glutamine) chain promotes the hydrolysis of glutamine to ammonia, which is used by the large (or ammonia) chain to synthesize carbamoyl phosphate. Tetramer of heterodimers (alpha,beta)4.

The catalysed reaction is hydrogencarbonate + L-glutamine + 2 ATP + H2O = carbamoyl phosphate + L-glutamate + 2 ADP + phosphate + 2 H(+). The enzyme catalyses L-glutamine + H2O = L-glutamate + NH4(+). It participates in amino-acid biosynthesis; L-arginine biosynthesis; carbamoyl phosphate from bicarbonate: step 1/1. Its pathway is pyrimidine metabolism; UMP biosynthesis via de novo pathway; (S)-dihydroorotate from bicarbonate: step 1/3. Small subunit of the glutamine-dependent carbamoyl phosphate synthetase (CPSase). CPSase catalyzes the formation of carbamoyl phosphate from the ammonia moiety of glutamine, carbonate, and phosphate donated by ATP, constituting the first step of 2 biosynthetic pathways, one leading to arginine and/or urea and the other to pyrimidine nucleotides. The small subunit (glutamine amidotransferase) binds and cleaves glutamine to supply the large subunit with the substrate ammonia. The chain is Carbamoyl phosphate synthase small chain from Neisseria meningitidis serogroup B (strain ATCC BAA-335 / MC58).